The chain runs to 369 residues: Caffeine synthase 1 (369 aa).

Tyrosine 24 provides a ligand contact to S-adenosyl-L-homocysteine. A caffeine-binding site is contributed by threonine 31. Residues cysteine 66, asparagine 71, aspartate 103, leucine 104, serine 138, and phenylalanine 139 each coordinate S-adenosyl-L-homocysteine. 3 residues coordinate caffeine: tyrosine 156, histidine 159, and tryptophan 160. Asparagine 177 contacts Mg(2+). Arginine 225 is a binding site for caffeine. Mg(2+)-binding residues include aspartate 263, phenylalanine 265, and asparagine 266. Residue phenylalanine 321 coordinates caffeine.

This sequence belongs to the methyltransferase superfamily. Type-7 methyltransferase family. Mg(2+) serves as cofactor.

It carries out the reaction theobromine + S-adenosyl-L-methionine = caffeine + S-adenosyl-L-homocysteine + H(+). It catalyses the reaction 7-methylxanthine + S-adenosyl-L-methionine = theobromine + S-adenosyl-L-homocysteine + H(+). It participates in alkaloid biosynthesis. Involved in the biosynthesis of caffeine. Catalyzes the conversion of 7-methylxanthine (7mX) to theobromine and of theobromine to caffeine. The polypeptide is Caffeine synthase 1 (Camellia taliensis (Wild tea)).